The primary structure comprises 179 residues: MARLKEIYRKEIAPKLKEELQLANVMEVPRVTKITLNMGLGEAVGDKKIIENAVADLEKITGQKPIVTYARKSIAGFKIREGWPIGVKVTLRSDRMYEFLDRLLSISLPRVRDFRGLNAKSFDGRGNYSMGVKEQIIFPEIDYDKIDALRGLDITLTTTARTDDEGRALLRAFKFPFRN.

Belongs to the universal ribosomal protein uL5 family. In terms of assembly, part of the 50S ribosomal subunit; part of the 5S rRNA/L5/L18/L25 subcomplex. Contacts the 5S rRNA and the P site tRNA. Forms a bridge to the 30S subunit in the 70S ribosome.

In terms of biological role, this is one of the proteins that bind and probably mediate the attachment of the 5S RNA into the large ribosomal subunit, where it forms part of the central protuberance. In the 70S ribosome it contacts protein S13 of the 30S subunit (bridge B1b), connecting the 2 subunits; this bridge is implicated in subunit movement. Contacts the P site tRNA; the 5S rRNA and some of its associated proteins might help stabilize positioning of ribosome-bound tRNAs. In Pseudomonas paraeruginosa (strain DSM 24068 / PA7) (Pseudomonas aeruginosa (strain PA7)), this protein is Large ribosomal subunit protein uL5.